The chain runs to 85 residues: Serine protease inhibitor Kazal-type 7 (85 aa).

An N-terminal signal peptide occupies residues 1 to 19 (MKITGGLLLLCTVVYFCSS). The region spanning 26–85 (SPKKVDCSIYKKYPVVAIPCPITYLPVCGSDYITYGNECHLCTESLKSNGRVQFLHDGSC) is the Kazal-like domain. 3 disulfide bridges follow: cysteine 32–cysteine 67, cysteine 45–cysteine 64, and cysteine 53–cysteine 85.

Its subcellular location is the secreted. Probable serine protease inhibitor. The polypeptide is Serine protease inhibitor Kazal-type 7 (SPINK7) (Homo sapiens (Human)).